The sequence spans 508 residues: 4-trimethylaminobutyraldehyde dehydrogenase A (508 aa).

NAD(+) is bound by residues Lys-194 and 246–250 (GSVPT). The active-site Proton acceptor is the Glu-268. Cys-302 functions as the Nucleophile in the catalytic mechanism. Glu-405 serves as a coordination point for NAD(+).

It belongs to the aldehyde dehydrogenase family. Homotetramer.

Its subcellular location is the cytoplasm. It localises to the cytosol. It carries out the reaction 4-(trimethylamino)butanal + NAD(+) + H2O = 4-(trimethylamino)butanoate + NADH + 2 H(+). The catalysed reaction is an aldehyde + NAD(+) + H2O = a carboxylate + NADH + 2 H(+). It functions in the pathway amine and polyamine biosynthesis; carnitine biosynthesis. Functionally, converts gamma-trimethylaminobutyraldehyde into gamma-butyrobetaine with high efficiency (in vitro). Can catalyze the irreversible oxidation of a broad range of aldehydes to the corresponding acids in an NAD-dependent reaction, but with low efficiency. The protein is 4-trimethylaminobutyraldehyde dehydrogenase A (aldh9a1a) of Danio rerio (Zebrafish).